We begin with the raw amino-acid sequence, 519 residues long: Cell division cycle protein 20 homolog B (519 aa).

The disordered stretch occupies residues 77–106 (WQLSPARDPESSSSVEEGPPSHTPESLASG). Residues 87–96 (SSSSVEEGPP) are compositionally biased toward low complexity. 6 WD repeats span residues 229–266 (RNDYYLNTLDWSSQNLVAVALGTSVYIWNGQNHSWIEN), 271–310 (VCCHYVSSVTWMREGSCLAVGTSEGEVQLWDAITKKQLRN), 353–392 (YHKEAVCSLKWSPDGRLLSSGCNDGLLTIWPHDPGAGVQG), 399–441 (PQST…NIQT), 443–484 (STQS…RSGG), and 487–519 (GHRDRVLHLSLSPDQTRLFSAAADGTACVWKCC).

Belongs to the WD repeat CDC20/Fizzy family. Expressed in multiciliated cells (MCCs).

Its subcellular location is the cytoplasm. Functionally, protein regulator of centriole-deuterosome disengagement and subsequently participates in the ciliogenesis in multiciliated cells (MCCs). In Mus musculus (Mouse), this protein is Cell division cycle protein 20 homolog B.